The primary structure comprises 373 residues: Molybdenum import ATP-binding protein ModC (373 aa).

An ABC transporter domain is found at 4–240 (LTPPTIRAAF…PKLPLAIARD (237 aa)). Residue 38–45 (GPSGCGKS) coordinates ATP. The 71-residue stretch at 299–369 (ASSILNAIAA…IKGVALAPGR (71 aa)) folds into the Mop domain.

It belongs to the ABC transporter superfamily. Molybdate importer (TC 3.A.1.8) family. As to quaternary structure, the complex is composed of two ATP-binding proteins (ModC), two transmembrane proteins (ModB) and a solute-binding protein (ModA).

The protein localises to the cell inner membrane. It catalyses the reaction molybdate(out) + ATP + H2O = molybdate(in) + ADP + phosphate + H(+). Functionally, part of the ABC transporter complex ModABC involved in molybdenum import. Responsible for energy coupling to the transport system. The polypeptide is Molybdenum import ATP-binding protein ModC (Rhodopseudomonas palustris (strain ATCC BAA-98 / CGA009)).